Consider the following 220-residue polypeptide: Ribose-5-phosphate isomerase A (220 aa).

Substrate is bound by residues Thr28 to Thr31, Asp81 to Asp84, and Lys94 to Gly97. Glu103 acts as the Proton acceptor in catalysis. Position 121 (Lys121) interacts with substrate.

It belongs to the ribose 5-phosphate isomerase family. Homodimer.

It catalyses the reaction aldehydo-D-ribose 5-phosphate = D-ribulose 5-phosphate. The protein operates within carbohydrate degradation; pentose phosphate pathway; D-ribose 5-phosphate from D-ribulose 5-phosphate (non-oxidative stage): step 1/1. Functionally, catalyzes the reversible conversion of ribose-5-phosphate to ribulose 5-phosphate. The protein is Ribose-5-phosphate isomerase A of Hydrogenovibrio crunogenus (strain DSM 25203 / XCL-2) (Thiomicrospira crunogena).